A 230-amino-acid polypeptide reads, in one-letter code: Sugar fermentation stimulation protein homolog (230 aa).

It belongs to the SfsA family.

In Ruegeria pomeroyi (strain ATCC 700808 / DSM 15171 / DSS-3) (Silicibacter pomeroyi), this protein is Sugar fermentation stimulation protein homolog.